We begin with the raw amino-acid sequence, 346 residues long: Small ribosomal subunit biogenesis GTPase RsgA (346 aa).

Positions 1 to 26 (MAKRKLTQNQTRRIQSNNAKTLHRHK) are disordered. The span at 7–20 (TQNQTRRIQSNNAK) shows a compositional bias: polar residues. The 169-residue stretch at 103–271 (ENEISRPDYY…LIDSPGIREF (169 aa)) folds into the CP-type G domain. Residues 159-162 (NKVD) and 213-221 (GQSGVGKSS) each bind GTP. C295, C300, H302, and C308 together coordinate Zn(2+).

It belongs to the TRAFAC class YlqF/YawG GTPase family. RsgA subfamily. In terms of assembly, monomer. Associates with 30S ribosomal subunit, binds 16S rRNA. It depends on Zn(2+) as a cofactor.

The protein localises to the cytoplasm. Functionally, one of several proteins that assist in the late maturation steps of the functional core of the 30S ribosomal subunit. Helps release RbfA from mature subunits. May play a role in the assembly of ribosomal proteins into the subunit. Circularly permuted GTPase that catalyzes slow GTP hydrolysis, GTPase activity is stimulated by the 30S ribosomal subunit. This chain is Small ribosomal subunit biogenesis GTPase RsgA, found in Haemophilus influenzae (strain PittEE).